Consider the following 315-residue polypeptide: Aspartate carbamoyltransferase catalytic subunit (315 aa).

The carbamoyl phosphate site is built by R55 and T56. K83 lines the L-aspartate pocket. The carbamoyl phosphate site is built by R105, H138, and Q141. Residues R171 and R225 each coordinate L-aspartate. Carbamoyl phosphate is bound by residues G266 and P267.

Belongs to the aspartate/ornithine carbamoyltransferase superfamily. ATCase family. Heterododecamer (2C3:3R2) of six catalytic PyrB chains organized as two trimers (C3), and six regulatory PyrI chains organized as three dimers (R2).

The catalysed reaction is carbamoyl phosphate + L-aspartate = N-carbamoyl-L-aspartate + phosphate + H(+). It participates in pyrimidine metabolism; UMP biosynthesis via de novo pathway; (S)-dihydroorotate from bicarbonate: step 2/3. Catalyzes the condensation of carbamoyl phosphate and aspartate to form carbamoyl aspartate and inorganic phosphate, the committed step in the de novo pyrimidine nucleotide biosynthesis pathway. The sequence is that of Aspartate carbamoyltransferase catalytic subunit from Mycolicibacterium gilvum (strain PYR-GCK) (Mycobacterium gilvum (strain PYR-GCK)).